Reading from the N-terminus, the 187-residue chain is Interferon beta (187 aa).

The N-terminal stretch at 1–21 (MTNKCLLQIALLLCFSTTALS) is a signal peptide. The residue at position 24 (Tyr-24) is a Phosphotyrosine. Cys-52 and Cys-162 form a disulfide bridge. An N-linked (GlcNAc...) asparagine glycan is attached at Asn-101.

It belongs to the alpha/beta interferon family. Monomer.

Its subcellular location is the secreted. Functionally, type I interferon cytokine that plays a key role in the innate immune response to infection, developing tumors and other inflammatory stimuli. Signals via binding to high-affinity (IFNAR2) and low-affinity (IFNAR1) heterodimeric receptor, activating the canonical Jak-STAT signaling pathway resulting in transcriptional activation or repression of interferon-regulated genes that encode the effectors of the interferon response, such as antiviral proteins, regulators of cell proliferation and differentiation, and immunoregulatory proteins. Signals mostly via binding to a IFNAR1-IFNAR2 heterodimeric receptor, but can also function with IFNAR1 alone and independently of Jak-STAT pathways. Elicits a wide variety of responses, including antiviral and antibacterial activities, and can regulate the development of B-cells, myelopoiesis and lipopolysaccharide (LPS)-inducible production of tumor necrosis factor. Plays a role in neuronal homeostasis by regulating dopamine turnover and protecting dopaminergic neurons: acts by promoting neuronal autophagy and alpha-synuclein clearance, thereby preventing dopaminergic neuron loss. IFNB1 is more potent than interferon-alpha (IFN-alpha) in inducing the apoptotic and antiproliferative pathways required for control of tumor cell growth. The chain is Interferon beta (IFNB1) from Macaca fascicularis (Crab-eating macaque).